The sequence spans 216 residues: Orotidine 5'-phosphate decarboxylase (216 aa).

Substrate-binding positions include Asp-12, Lys-34, 62 to 71 (DFKVADIDAT), Ser-119, 172 to 182 (PGVGFQGGNAK), Gly-194, and Arg-195. The active-site Proton donor is the Lys-64.

Belongs to the OMP decarboxylase family. Type 1 subfamily. As to quaternary structure, homodimer.

The catalysed reaction is orotidine 5'-phosphate + H(+) = UMP + CO2. It participates in pyrimidine metabolism; UMP biosynthesis via de novo pathway; UMP from orotate: step 2/2. Functionally, catalyzes the decarboxylation of orotidine 5'-monophosphate (OMP) to uridine 5'-monophosphate (UMP). This chain is Orotidine 5'-phosphate decarboxylase, found in Methanosphaera stadtmanae (strain ATCC 43021 / DSM 3091 / JCM 11832 / MCB-3).